A 100-amino-acid polypeptide reads, in one-letter code: Large ribosomal subunit protein bL21 (100 aa).

The protein belongs to the bacterial ribosomal protein bL21 family. In terms of assembly, part of the 50S ribosomal subunit. Contacts protein L20.

This protein binds to 23S rRNA in the presence of protein L20. The protein is Large ribosomal subunit protein bL21 of Corynebacterium kroppenstedtii (strain DSM 44385 / JCM 11950 / CIP 105744 / CCUG 35717).